The sequence spans 321 residues: uncharacterized protein (321 aa).

The region spanning 130–314 (NLVYDLETTG…NDVDALIKIM (185 aa)) is the Exonuclease domain.

This is an uncharacterized protein from Acanthamoeba polyphaga (Amoeba).